The sequence spans 481 residues: Protein nucleotidyltransferase YdiU (481 aa).

Residues Gly-85, Gly-87, Arg-88, Lys-108, Asp-120, Gly-121, Arg-171, and Arg-178 each contribute to the ATP site. The active-site Proton acceptor is the Asp-248. Mg(2+)-binding residues include Asn-249 and Asp-258. Asp-258 lines the ATP pocket. The interval 458–481 (HPGLAEFQQPPTPEQKGLQLSCSS) is disordered.

It belongs to the SELO family. Requires Mg(2+) as cofactor. Mn(2+) is required as a cofactor.

The catalysed reaction is L-seryl-[protein] + ATP = 3-O-(5'-adenylyl)-L-seryl-[protein] + diphosphate. It catalyses the reaction L-threonyl-[protein] + ATP = 3-O-(5'-adenylyl)-L-threonyl-[protein] + diphosphate. It carries out the reaction L-tyrosyl-[protein] + ATP = O-(5'-adenylyl)-L-tyrosyl-[protein] + diphosphate. The enzyme catalyses L-histidyl-[protein] + UTP = N(tele)-(5'-uridylyl)-L-histidyl-[protein] + diphosphate. The catalysed reaction is L-seryl-[protein] + UTP = O-(5'-uridylyl)-L-seryl-[protein] + diphosphate. It catalyses the reaction L-tyrosyl-[protein] + UTP = O-(5'-uridylyl)-L-tyrosyl-[protein] + diphosphate. Its function is as follows. Nucleotidyltransferase involved in the post-translational modification of proteins. It can catalyze the addition of adenosine monophosphate (AMP) or uridine monophosphate (UMP) to a protein, resulting in modifications known as AMPylation and UMPylation. The chain is Protein nucleotidyltransferase YdiU from Hydrogenovibrio crunogenus (strain DSM 25203 / XCL-2) (Thiomicrospira crunogena).